The following is a 465-amino-acid chain: Ribulose bisphosphate carboxylase large chain (465 aa).

The residue at position 4 (Lys4) is an N6,N6,N6-trimethyllysine. Residues Asn113 and Thr163 each contribute to the substrate site. The active-site Proton acceptor is the Lys165. Lys167 contributes to the substrate binding site. Mg(2+)-binding residues include Lys191, Asp193, and Glu194. The residue at position 191 (Lys191) is an N6-carboxylysine. The active-site Proton acceptor is the His284. Arg285, His317, and Ser369 together coordinate substrate.

It belongs to the RuBisCO large chain family. Type I subfamily. In terms of assembly, heterohexadecamer of 8 large chains and 8 small chains; disulfide-linked. The disulfide link is formed within the large subunit homodimers. Mg(2+) is required as a cofactor. Post-translationally, the disulfide bond which can form in the large chain dimeric partners within the hexadecamer appears to be associated with oxidative stress and protein turnover.

The protein resides in the plastid. It localises to the chloroplast. The catalysed reaction is 2 (2R)-3-phosphoglycerate + 2 H(+) = D-ribulose 1,5-bisphosphate + CO2 + H2O. It carries out the reaction D-ribulose 1,5-bisphosphate + O2 = 2-phosphoglycolate + (2R)-3-phosphoglycerate + 2 H(+). Functionally, ruBisCO catalyzes two reactions: the carboxylation of D-ribulose 1,5-bisphosphate, the primary event in carbon dioxide fixation, as well as the oxidative fragmentation of the pentose substrate in the photorespiration process. Both reactions occur simultaneously and in competition at the same active site. This Bursera inaguensis (Elaphrium inaguense) protein is Ribulose bisphosphate carboxylase large chain.